The primary structure comprises 211 residues: Pyrrolidone-carboxylate peptidase 1 (211 aa).

Residues glutamate 79, cysteine 142, and histidine 164 contribute to the active site.

This sequence belongs to the peptidase C15 family. In terms of assembly, homotetramer.

It localises to the cytoplasm. It carries out the reaction Release of an N-terminal pyroglutamyl group from a polypeptide, the second amino acid generally not being Pro.. Removes 5-oxoproline from various penultimate amino acid residues except L-proline. The sequence is that of Pyrrolidone-carboxylate peptidase 1 (pcp1) from Saccharolobus solfataricus (strain ATCC 35092 / DSM 1617 / JCM 11322 / P2) (Sulfolobus solfataricus).